The primary structure comprises 88 residues: Translation initiation factor IF-1 3 (88 aa).

The S1-like domain occupies 1–72; the sequence is MAKEELLELD…TKGCINFRHK (72 aa).

This sequence belongs to the IF-1 family. In terms of assembly, component of the 30S ribosomal translation pre-initiation complex which assembles on the 30S ribosome in the order IF-2 and IF-3, IF-1 and N-formylmethionyl-tRNA(fMet); mRNA recruitment can occur at any time during PIC assembly.

It localises to the cytoplasm. Its function is as follows. One of the essential components for the initiation of protein synthesis. Stabilizes the binding of IF-2 and IF-3 on the 30S subunit to which N-formylmethionyl-tRNA(fMet) subsequently binds. Helps modulate mRNA selection, yielding the 30S pre-initiation complex (PIC). Upon addition of the 50S ribosomal subunit IF-1, IF-2 and IF-3 are released leaving the mature 70S translation initiation complex. The sequence is that of Translation initiation factor IF-1 3 from Burkholderia orbicola (strain AU 1054).